The following is a 354-amino-acid chain: Homoserine O-succinyltransferase (354 aa).

The active-site Acyl-thioester intermediate is the C146. K167 and S196 together coordinate substrate. Residue H239 is the Proton acceptor of the active site. E241 is a catalytic residue. R253 is a binding site for substrate.

This sequence belongs to the MetA family.

It is found in the cytoplasm. The catalysed reaction is L-homoserine + succinyl-CoA = O-succinyl-L-homoserine + CoA. It participates in amino-acid biosynthesis; L-methionine biosynthesis via de novo pathway; O-succinyl-L-homoserine from L-homoserine: step 1/1. Its function is as follows. Transfers a succinyl group from succinyl-CoA to L-homoserine, forming succinyl-L-homoserine. The polypeptide is Homoserine O-succinyltransferase (Methylobacter tundripaludum (strain ATCC BAA-1195 / DSM 17260 / SV96)).